A 283-amino-acid polypeptide reads, in one-letter code: Tetraspanin-33 (283 aa).

Residues M1–Y24 are Cytoplasmic-facing. A helical transmembrane segment spans residues L25–V45. Residues Y46–P64 are Extracellular-facing. Residues A65–G85 form a helical membrane-spanning segment. The Cytoplasmic portion of the chain corresponds to S86 to T96. Residues F97–V117 form a helical membrane-spanning segment. Residues F118–N235 lie on the Extracellular side of the membrane. 4 cysteine pairs are disulfide-bonded: C156–C224, C157–C189, C173–C183, and C190–C203. N172 is a glycosylation site (N-linked (GlcNAc...) asparagine). The helical transmembrane segment at L236–L256 threads the bilayer. The Cytoplasmic segment spans residues S257–Y283.

This sequence belongs to the tetraspanin (TM4SF) family. As to quaternary structure, homodimer; disulfide-linked. Interacts (via extracellular domain) with ADAM10 (via extracellular domain). Interacts (via cytoplasmic domain) with PLEKHA7 (via WW domains); the interaction is dependent on PDZD11 being bound to PLEKHA7 and facilitates the docking of ADAM10 to zonula adherens.

It is found in the cell membrane. The protein localises to the cell junction. It localises to the adherens junction. Its subcellular location is the cytoplasm. Functionally, part of TspanC8 subgroup, composed of 6 members that interact with the transmembrane metalloprotease ADAM10. This interaction is required for ADAM10 exit from the endoplasmic reticulum and for enzymatic maturation and trafficking to the cell surface as well as substrate specificity. Different TspanC8/ADAM10 complexes have distinct substrates. Plays an important role in normal erythropoiesis. It has a role in the differentiation of erythroid progenitors. Negatively regulates ligand-induced Notch activity probably by regulating ADAM10 activity. Mediates docking of ADAM10 to zonula adherens by interacting with ADAM10 and, in a PDZD11-dependent manner, with the zonula adherens protein PLEKHA7. The polypeptide is Tetraspanin-33 (TSPAN33) (Bos taurus (Bovine)).